Reading from the N-terminus, the 466-residue chain is Ribosome biogenesis protein YTM1 (466 aa).

The tract at residues 11–99 is ubiquitin-like (UBL) domain; it reads IKIKFFTNEE…EAFLTLEYTR (89 aa). Positions 109–466 are sufficient for interaction with ERB1 and association with 66S pre-ribosomes; the sequence is SFNNDDWISS…QINKGSDIAK (358 aa). 7 WD repeats span residues 124–163, 165–203, 219–258, 296–336, 338–377, 384–424, and 431–466; these read PTTKIVMSSQLSISQPKILSGSYDGIVRTYNMSGKVEKQY, GHSAPVKAVKWISPTRIVSAGNDRQVRLWKTSYEEIIDE, GHKAPVVDLAVDTQTNRILSAGYDQNIGFWSTNYKEMTSI, GHSE…CVDT, TTGYSLLSVLQLPQVNLIASGSSARHINLHDPRVTTTSDQ, GHTN…SLYT, and STNAKIFDVCWDDRIGIISGGEDKKLQINKGSDIAK.

The protein belongs to the WD repeat WDR12/YTM1 family. Component of the NOP7 complex, composed of ERB1, NOP7 and YTM1. The complex is held together by ERB1, which interacts with NOP7 via its N-terminal domain and with YTM1 via a high-affinity interaction between the seven-bladed beta-propeller domains of the 2 proteins. The NOP7 complex associates with the 66S pre-ribosome. Interacts (via UBL domain) with MDN1 (via VWFA/MIDAS domain).

Its subcellular location is the nucleus. It is found in the nucleolus. The protein resides in the nucleoplasm. In terms of biological role, component of the NOP7 complex, which is required for maturation of the 25S and 5.8S ribosomal RNAs and formation of the 60S ribosome. This Candida albicans (strain SC5314 / ATCC MYA-2876) (Yeast) protein is Ribosome biogenesis protein YTM1.